Consider the following 217-residue polypeptide: Probable transaldolase (217 aa).

The active-site Schiff-base intermediate with substrate is the K83.

It belongs to the transaldolase family. Type 3B subfamily.

It localises to the cytoplasm. It carries out the reaction D-sedoheptulose 7-phosphate + D-glyceraldehyde 3-phosphate = D-erythrose 4-phosphate + beta-D-fructose 6-phosphate. The protein operates within carbohydrate degradation; pentose phosphate pathway; D-glyceraldehyde 3-phosphate and beta-D-fructose 6-phosphate from D-ribose 5-phosphate and D-xylulose 5-phosphate (non-oxidative stage): step 2/3. In terms of biological role, transaldolase is important for the balance of metabolites in the pentose-phosphate pathway. The chain is Probable transaldolase from Roseobacter denitrificans (strain ATCC 33942 / OCh 114) (Erythrobacter sp. (strain OCh 114)).